Here is a 338-residue protein sequence, read N- to C-terminus: 1-aminocyclopropane-1-carboxylate deaminase (338 aa).

Residue Lys-51 is modified to N6-(pyridoxal phosphate)lysine. Ser-78 acts as the Nucleophile in catalysis.

The protein belongs to the ACC deaminase/D-cysteine desulfhydrase family. As to quaternary structure, homotrimer. Pyridoxal 5'-phosphate serves as cofactor.

It carries out the reaction 1-aminocyclopropane-1-carboxylate + H2O = 2-oxobutanoate + NH4(+). Its function is as follows. Catalyzes a cyclopropane ring-opening reaction, the irreversible conversion of 1-aminocyclopropane-1-carboxylate (ACC) to ammonia and alpha-ketobutyrate. Allows growth on ACC as a nitrogen source. The polypeptide is 1-aminocyclopropane-1-carboxylate deaminase (Pseudomonas putida (Arthrobacter siderocapsulatus)).